An 890-amino-acid chain; its full sequence is Translation initiation factor IF-2 (890 aa).

The interval 110-216 (ISKPISKAPQ…KKPLIKTQDH (107 aa)) is disordered. Basic residues predominate over residues 135-148 (VPKRKGLVIIKKKR). Residues 184–199 (KSYNEPKNKENDDIKK) are compositionally biased toward basic and acidic residues. Residues 200–210 (QKVKKEKKKPL) are compositionally biased toward basic residues. Residues 387-554 (TRPPVVTIMG…NILLQAEILE (168 aa)) form the tr-type G domain. A G1 region spans residues 396 to 403 (GHVDHGKT). 396-403 (GHVDHGKT) is a binding site for GTP. A G2 region spans residues 421–425 (GITQH). A G3 region spans residues 442 to 445 (DTPG). Residues 442–446 (DTPGH) and 496–499 (NKMD) contribute to the GTP site. Positions 496–499 (NKMD) are G4. The segment at 532-534 (SAR) is G5.

It belongs to the TRAFAC class translation factor GTPase superfamily. Classic translation factor GTPase family. IF-2 subfamily.

It is found in the cytoplasm. Its function is as follows. One of the essential components for the initiation of protein synthesis. Protects formylmethionyl-tRNA from spontaneous hydrolysis and promotes its binding to the 30S ribosomal subunits. Also involved in the hydrolysis of GTP during the formation of the 70S ribosomal complex. This Aliarcobacter butzleri (strain RM4018) (Arcobacter butzleri) protein is Translation initiation factor IF-2.